The chain runs to 418 residues: Secreted aspartic protease 5 (418 aa).

The first 18 residues, 1–18 (MFLKNILSVLAFALLIDA), serve as a signal peptide directing secretion. A propeptide spans 19 to 76 (APVKRSPGFVTLDFNVKRSLVDPDDPTVEAKRSPLFLEFTPSEFPVDETGRDGDVDKR) (activation peptide). Positions 90 to 404 (YTADITVGSD…NLDDKKISMA (315 aa)) constitute a Peptidase A1 domain. The active site involves Asp108. 108-110 (DTG) lines the pepstatin A pocket. An intrachain disulfide couples Cys123 to Cys135. 161-162 (GD) lines the pepstatin A pocket. Glu268 lines the Zn(2+) pocket. Residue Asp294 is part of the active site. 294–298 (DSGTT) contacts pepstatin A. A disulfide bridge connects residues Cys332 and Cys370.

Belongs to the peptidase A1 family.

The protein resides in the secreted. It carries out the reaction Preferential cleavage at the carboxyl of hydrophobic amino acids, but fails to cleave 15-Leu-|-Tyr-16, 16-Tyr-|-Leu-17 and 24-Phe-|-Phe-25 of insulin B chain. Activates trypsinogen, and degrades keratin.. Its activity is regulated as follows. Inhibited by pepstatin A analogs. Secreted aspartic peptidases (SAPs) are a group of ten acidic hydrolases considered as key virulence factors. These enzymes supply the fungus with nutrient amino acids as well as are able to degrade the selected host's proteins involved in the immune defense. Moreover, acts toward human hemoglobin though limited proteolysis to generate a variety of antimicrobial hemocidins, enabling to compete with the other microorganisms of the same physiological niche using the microbicidal peptides generated from the host protein. This is Secreted aspartic protease 5 from Candida albicans (strain SC5314 / ATCC MYA-2876) (Yeast).